The primary structure comprises 367 residues: Trans-enoyl reductase ffsC (367 aa).

55–58 (CDWK) is a binding site for NADP(+). 143–150 (TGIGTLGL) is a binding site for substrate. NADP(+) contacts are provided by residues 203–206 (SAKN), tyrosine 221, and 268–269 (LE). Substrate is bound at residue 288 to 292 (GMAIL). 357 to 358 (VS) is a binding site for NADP(+).

It belongs to the zinc-containing alcohol dehydrogenase family. As to quaternary structure, monomer.

It functions in the pathway mycotoxin biosynthesis. Its function is as follows. Trans-enoyl reductase; part of the gene cluster that mediates the biosynthesis of the cytotoxic leucine-containing cytochalasans, including aspochalasin C, aspochalasin E, TMC-169, flavichalasine F, aspergillin PZ, aspochalasin M and flavichalasine G. The first step in the pathway is catalyzed by the hybrid PKS-NRPS ffsA that utilizes 8 units of malonyl-CoA to iteratively assemble the octaketide chain before addition of L-leucine by the C-terminal NRPS modules. Because ffsA lacks a designated enoylreductase (ER) domain, the required activity is provided the enoyl reductase fssC. The methyltransferase (MT) domain of ffsA catalyzes the alpha-methylation at C10 and C14 using S-adenosyl-L-methionine as the methyl-donating cosubstrate. Reduction by the hydrolyase ffsE, followed by dehydration and intra-molecular Diels-Alder cyclization by the Diels-Alderase ffsF then yield the required isoindolone-fused macrocycle. A number of oxidative steps catalyzed by the tailoring cytochrome P450 monooxygenase ffsD, the FAD-linked oxidoreductase ffsJ and the short-chain dehydrogenase/reductase ffsI, are further required to afford the final products. This is Trans-enoyl reductase ffsC from Aspergillus flavipes.